The sequence spans 434 residues: Protein POLLENLESS 3 (434 aa).

The interval 13-47 is disordered; the sequence is VYYTPPPARTSDHVAAMPMTERRRPPYSCSSSSER. A Nuclear localization signal 1 motif is present at residues 34 to 37; the sequence is RRRP. 4 TPR repeats span residues 95–131, 133–164, 191–224, and 241–274; these read DSAL…ESQD, IDNL…LEQG, ARIL…ERDK, and PEAK…AVEM. Residues 142–166 adopt a coiled-coil conformation; it reads KKSGRIEEEAVLLEHKLQTLEQGMG. A disordered region spans residues 309–329; the sequence is TANKNYSDVSSSPASVRPNSA. The span at 310–326 shows a compositional bias: polar residues; the sequence is ANKNYSDVSSSPASVRP. Residues 377-380 carry the Nuclear localization signal 2 motif; the sequence is KRKK. A compositionally biased stretch (basic and acidic residues) spans 393-408; that stretch reads VKDTADGPKSESKKSW. Positions 393 to 434 are disordered; the sequence is VKDTADGPKSESKKSWADIAEEEEAEEEEEERLQGELKTAEM. Residues 408-434 adopt a coiled-coil conformation; it reads WADIAEEEEAEEEEEERLQGELKTAEM. Over residues 411–423 the composition is skewed to acidic residues; the sequence is IAEEEEAEEEEEE. Positions 424 to 434 are enriched in basic and acidic residues; it reads RLQGELKTAEM.

This sequence belongs to the MS5 protein family. In terms of tissue distribution, expressed at low levels mostly in floral organs during meiosis. Also barely detectable in leaves, stems and roots.

Its subcellular location is the nucleus. Functionally, essential for male fertility, especially for microspore and pollen grain production. Involved in the regulation of cell division after male meiosis I and II to facilitate exit from meiosis and transition to G1. This chain is Protein POLLENLESS 3, found in Arabidopsis thaliana (Mouse-ear cress).